The chain runs to 344 residues: L-rhamnose-proton symporter (344 aa).

10 helical membrane passes run 4 to 24 (AITM…CFYA), 38 to 58 (WSVG…ATLL), 72 to 92 (TLLP…NYGL), 101 to 121 (MGIG…TPII), 131 to 151 (TQGG…VGIV), 175 to 195 (LLLA…MNAA), 214 to 234 (LPSY…FCFI), 259 to 279 (LLLS…YAWG), 290 to 310 (MSWM…GLVL), and 323 to 343 (VLSL…LGMA).

The protein belongs to the L-rhamnose transporter (TC 2.A.7.6) family.

It localises to the cell inner membrane. The catalysed reaction is L-rhamnopyranose(in) + H(+)(in) = L-rhamnopyranose(out) + H(+)(out). In terms of biological role, uptake of L-rhamnose across the cytoplasmic membrane with the concomitant transport of protons into the cell (symport system). In Klebsiella pneumoniae (strain 342), this protein is L-rhamnose-proton symporter.